A 164-amino-acid chain; its full sequence is Interleukin-31 (164 aa).

A signal peptide spans 1–23 (MASHSGPSTSVLFLFCCLGGWLA). 2 N-linked (GlcNAc...) asparagine glycosylation sites follow: Asn67 and Asn100.

In terms of tissue distribution, detected at low levels in testis, bone marrow, skeletal muscle, kidney, colon, thymus, small intestine and trachea.

The protein localises to the secreted. In terms of biological role, activates STAT3 and possibly STAT1 and STAT5 through the IL31 heterodimeric receptor composed of IL31RA and OSMR. May function in skin immunity. Enhances myeloid progenitor cell survival in vitro. Induces RETNLA and serum amyloid A protein expression in macrophages. The chain is Interleukin-31 (IL31) from Homo sapiens (Human).